Reading from the N-terminus, the 586-residue chain is Asparagine synthetase [glutamine-hydrolyzing] (586 aa).

Cysteine 2 acts as the For GATase activity in catalysis. In terms of domain architecture, Glutamine amidotransferase type-2 spans 2 to 185; that stretch reads CGILAVLGCS…PGHLYSSKSG (184 aa). L-glutamine-binding positions include 50–54, 75–77, and aspartate 98; these read RLAII and NGE. One can recognise an Asparagine synthetase domain in the interval 194 to 517; it reads PPWFNESVPS…PQNSARLTVP (324 aa). Residues leucine 232, valine 268, and 342-343 each bind ATP; that span reads SG.

Belongs to the asparagine synthetase family.

The catalysed reaction is L-aspartate + L-glutamine + ATP + H2O = L-asparagine + L-glutamate + AMP + diphosphate + H(+). It participates in amino-acid biosynthesis; L-asparagine biosynthesis; L-asparagine from L-aspartate (L-Gln route): step 1/1. The polypeptide is Asparagine synthetase [glutamine-hydrolyzing] (Brassica oleracea (Wild cabbage)).